Reading from the N-terminus, the 540-residue chain is Phenylalanine--tRNA ligase beta subunit (540 aa).

The B5 domain occupies 270 to 347 (MTPRTLNVPR…IGYGFDKIKS (78 aa)). The Mg(2+) site is built by aspartate 325, aspartate 331, glutamate 334, and aspartate 335.

The protein belongs to the phenylalanyl-tRNA synthetase beta subunit family. Type 2 subfamily. As to quaternary structure, tetramer of two alpha and two beta subunits. Mg(2+) is required as a cofactor.

It is found in the cytoplasm. It carries out the reaction tRNA(Phe) + L-phenylalanine + ATP = L-phenylalanyl-tRNA(Phe) + AMP + diphosphate + H(+). The chain is Phenylalanine--tRNA ligase beta subunit from Methanococcoides burtonii (strain DSM 6242 / NBRC 107633 / OCM 468 / ACE-M).